The sequence spans 80 residues: Large ribosomal subunit protein uL29 (80 aa).

Belongs to the universal ribosomal protein uL29 family.

In Mycobacterium leprae (strain TN), this protein is Large ribosomal subunit protein uL29 (rpmC).